We begin with the raw amino-acid sequence, 541 residues long: Zinc finger protein 329 (541 aa).

A Phosphoserine modification is found at Ser-50. C2H2-type zinc fingers lie at residues 203–225, 231–253, 259–281, 287–309, 315–337, 343–365, 371–393, 399–421, 427–449, 455–477, 483–505, and 511–533; these read YRCTECGKCFKRNSSLVLHHRTH, YTCNECGKSFSKNYNLIVHQRIH, YECSKCGKAFSDGSALTQHQRIH, YECLECGKTFNRNSSLILHQRTH, YRCNECGKPFTDISHLTVHLRIH, YECSKCGKAFRDGSYLTQHERTH, FECAECGKSFNRNSHLIVHQKIH, YECKECGKTFIESAYLIRHQRIH, YGCNQCQKLFRNIAGLIRHQRTH, YECNQCGKAFRDSSCLTKHQRIH, YQCPECGKSFKQNSHLAVHQRLH, and SRCPQCGKMFQKSSSLVRHQRAH.

The protein belongs to the krueppel C2H2-type zinc-finger protein family.

The protein resides in the nucleus. Its function is as follows. May be involved in transcriptional regulation. The sequence is that of Zinc finger protein 329 (ZNF329) from Homo sapiens (Human).